The sequence spans 374 residues: Alginate lyase (374 aa).

A signal peptide spans 1 to 26 (MRNPKLKNLLAPTLLSLAMFAGATQA). Residues 67–68 (SK), 140–141 (HT), and tyrosine 258 each bind substrate.

Belongs to the polysaccharide lyase 5 family.

The protein localises to the periplasm. It catalyses the reaction Eliminative cleavage of alginate to give oligosaccharides with 4-deoxy-alpha-L-erythro-hex-4-enuronosyl groups at their non-reducing ends and beta-D-mannuronate at their reducing end.. Its function is as follows. Catalyzes the depolymerization of alginate by cleaving the beta-1,4 glycosidic bond between two adjacent sugar residues via a beta-elimination mechanism. May serve to degrade mislocalized alginate that is trapped in the periplasmic space. The protein is Alginate lyase of Cobetia marina (Deleya marina).